The sequence spans 292 residues: Leucine-rich repeat-containing protein 10B (292 aa).

Positions 1 to 20 are disordered; that stretch reads MGIAESTPDELPSDAEEQLR. Positions 7–16 are enriched in acidic residues; sequence TPDELPSDAE. LRR repeat units follow at residues 22-43, 45-66, 68-90, 91-112, 114-136, 137-158, 160-181, 183-204, and 205-226; these read GDQQ…VCAL, RLQK…IEEL, ELRI…CRLP, RLTR…FAQL, SLRC…LRLV, ALQS…LPRM, GLRG…LLRM, RLHI…HPLR, and ALRV…ADTV. The disordered stretch occupies residues 236–261; it reads RMAERDEPTPRPPPRRPARAFEDEEE.

In Homo sapiens (Human), this protein is Leucine-rich repeat-containing protein 10B (LRRC10B).